Here is a 456-residue protein sequence, read N- to C-terminus: Bifunctional protein GlmU (456 aa).

The interval 1–229 (MLNNAMSVVI…LSEVEGVNNR (229 aa)) is pyrophosphorylase. UDP-N-acetyl-alpha-D-glucosamine is bound by residues 11 to 14 (LAAG), K25, Q76, 81 to 82 (GT), 103 to 105 (YGD), G140, E154, N169, and N227. Residue D105 participates in Mg(2+) binding. N227 lines the Mg(2+) pocket. The tract at residues 230–250 (LQLSRLERVYQSEQAEKLLLA) is linker. The tract at residues 251–456 (GVMLRDPARF…EGWRRPVKKK (206 aa)) is N-acetyltransferase. Positions 333 and 351 each coordinate UDP-N-acetyl-alpha-D-glucosamine. H363 functions as the Proton acceptor in the catalytic mechanism. 2 residues coordinate UDP-N-acetyl-alpha-D-glucosamine: Y366 and N377. Residues A380, 386–387 (NY), S405, A423, and R440 contribute to the acetyl-CoA site.

This sequence in the N-terminal section; belongs to the N-acetylglucosamine-1-phosphate uridyltransferase family. In the C-terminal section; belongs to the transferase hexapeptide repeat family. Homotrimer. The cofactor is Mg(2+).

It is found in the cytoplasm. It catalyses the reaction alpha-D-glucosamine 1-phosphate + acetyl-CoA = N-acetyl-alpha-D-glucosamine 1-phosphate + CoA + H(+). It carries out the reaction N-acetyl-alpha-D-glucosamine 1-phosphate + UTP + H(+) = UDP-N-acetyl-alpha-D-glucosamine + diphosphate. The protein operates within nucleotide-sugar biosynthesis; UDP-N-acetyl-alpha-D-glucosamine biosynthesis; N-acetyl-alpha-D-glucosamine 1-phosphate from alpha-D-glucosamine 6-phosphate (route II): step 2/2. It participates in nucleotide-sugar biosynthesis; UDP-N-acetyl-alpha-D-glucosamine biosynthesis; UDP-N-acetyl-alpha-D-glucosamine from N-acetyl-alpha-D-glucosamine 1-phosphate: step 1/1. Its pathway is bacterial outer membrane biogenesis; LPS lipid A biosynthesis. Functionally, catalyzes the last two sequential reactions in the de novo biosynthetic pathway for UDP-N-acetylglucosamine (UDP-GlcNAc). The C-terminal domain catalyzes the transfer of acetyl group from acetyl coenzyme A to glucosamine-1-phosphate (GlcN-1-P) to produce N-acetylglucosamine-1-phosphate (GlcNAc-1-P), which is converted into UDP-GlcNAc by the transfer of uridine 5-monophosphate (from uridine 5-triphosphate), a reaction catalyzed by the N-terminal domain. This chain is Bifunctional protein GlmU, found in Shigella boydii serotype 4 (strain Sb227).